A 610-amino-acid chain; its full sequence is Zinc metalloproteinase-disintegrin-like halysase (610 aa).

A signal peptide spans 1–20 (MIQVLLVTICLAVFPYQGSS). The propeptide occupies 21–182 (IILESGNVND…WESYEPIKKA (162 aa)). The Peptidase M12B domain maps to 199-395 (KYVKLVMVAD…DMPQCILKKP (197 aa)). Residue N218 is glycosylated (N-linked (GlcNAc...) asparagine). 3 disulfides stabilise this stretch: C310/C390, C350/C374, and C352/C357. A Zn(2+)-binding site is contributed by H335. Residue E336 is part of the active site. Residues H339 and H345 each coordinate Zn(2+). The Disintegrin domain occupies 403-488 (PPVCGNYFVE…AECTDRFQRN (86 aa)). Positions 405, 408, 410, 412, 415, and 418 each coordinate Ca(2+). 14 cysteine pairs are disulfide-bonded: C406-C435, C417-C430, C419-C425, C429-C452, C443-C449, C448-C474, C461-C481, C468-C499, C492-C504, C511-C561, C526-C572, C539-C549, C556-C598, and C592-C603. A D/ECD-tripeptide motif is present at residues 467–469 (ECD).

This sequence belongs to the venom metalloproteinase (M12B) family. P-III subfamily. P-IIIa sub-subfamily. Monomer. Requires Zn(2+) as cofactor. Expressed by the venom gland.

Its subcellular location is the secreted. Its activity is regulated as follows. Inhibited by EDTA and EGTA. Not inhibited by PMSF, antipain, pepstatin, and iodoacetamide. Its function is as follows. Strongly inhibits the collagen-induced human platelet aggregation (inhibition of alpha-2/beta-1 (ITGA2/ITGB1) integrin). Hydrolyzes the Aalpha-chain of fibrinogen, without cleavage of Bbeta- and gamma-chains. Degrades type IV collagen (but not types I, II and V), fibronectin and vitronectin and also integrins alpha-1/beta-1 (ITGA1/ITGB1) and alpha-5/beta/1 (ITGA5/ITGB1) (but not alpha-V/beta-3 (ITGAV/ITGB3) and alpha-V/beta-5 (ITGAV/ITGB5) integrins). Both metalloproteinase (peptidase M12B) and disintegrin-like domains (recombinantly expressed and named halydin) play characteristic roles to inhibit human platelet aggregation. Induces apoptosis and strongly inhibits proliferation of endothelial cells as well as adhesion of the cells to extracellular matrix proteins. The apoptosis is closely associated with activation of caspase-3 and decreased level of Bcl-X(L)/Bax. Apohalysase, which lacks metalloprotease activity, is also able to induce the apoptosis. Cleaves insulin B chain at '34-His-|-Leu-35', '37-Glu-|-Ala-38', '38-Ala-|-Leu-39', '39-Leu-|-Tyr-40', '40-Tyr-|-Leu-41', '47-Gly-|-Phe-48' and '48-Phe-|-Phe-49' bonds. This chain is Zinc metalloproteinase-disintegrin-like halysase, found in Gloydius halys (Chinese water mocassin).